A 145-amino-acid polypeptide reads, in one-letter code: Bacilliredoxin SAOUHSC_01610 (145 aa).

It belongs to the bacilliredoxin family.

The chain is Bacilliredoxin SAOUHSC_01610 from Staphylococcus aureus (strain NCTC 8325 / PS 47).